A 394-amino-acid chain; its full sequence is NAC domain-containing protein 3 (394 aa).

In terms of domain architecture, NAC spans 3–147 (TPVGLRFCPT…TYTLCKVMFN (145 aa)). Residues 104-153 (IGEKKILMFYTSKESKSDWVIHEYHGFSHNQMMMTYTLCKVMFNGGMREK) mediate DNA binding. 2 disordered regions span residues 152–173 (EKSS…RRDS) and 264–300 (NSLT…CDSF). The span at 155–165 (SSSPSSSGVSG) shows a compositional bias: low complexity. Residues 286–300 (PKTNSIQTSSTCDSF) show a composition bias toward polar residues.

It is found in the nucleus. The polypeptide is NAC domain-containing protein 3 (NAC003) (Arabidopsis thaliana (Mouse-ear cress)).